We begin with the raw amino-acid sequence, 669 residues long: UvrABC system protein C (669 aa).

One can recognise a GIY-YIG domain in the interval 16–95 (TNPGVYRFRD…IKEFKPRFNV (80 aa)). A UVR domain is found at 207–242 (KRFIGRLEKDMAAAVAELDYERAARVRDDIIALRKV).

Belongs to the UvrC family. As to quaternary structure, interacts with UvrB in an incision complex.

The protein resides in the cytoplasm. In terms of biological role, the UvrABC repair system catalyzes the recognition and processing of DNA lesions. UvrC both incises the 5' and 3' sides of the lesion. The N-terminal half is responsible for the 3' incision and the C-terminal half is responsible for the 5' incision. This chain is UvrABC system protein C, found in Arthrobacter sp. (strain FB24).